We begin with the raw amino-acid sequence, 314 residues long: Serine/threonine-protein phosphatase CPPED1 (314 aa).

Ser-2 carries the phosphoserine modification. Residues 47–250 (KAWSTGDCDN…KVVFSGHYHR (204 aa)) are catalytic. A divalent metal cation contacts are provided by Asp-53, Asp-90, Asn-127, and His-247. Ser-294 bears the Phosphoserine mark.

The protein belongs to the metallophosphoesterase superfamily. CPPED1 family. It depends on a divalent metal cation as a cofactor.

The protein resides in the cytoplasm. The catalysed reaction is O-phospho-L-seryl-[protein] + H2O = L-seryl-[protein] + phosphate. The enzyme catalyses O-phospho-L-threonyl-[protein] + H2O = L-threonyl-[protein] + phosphate. Its function is as follows. Protein phosphatase that dephosphorylates AKT family kinase specifically at 'Ser-473', blocking cell cycle progression and promoting cell apoptosis. May play an inhibitory role in glucose uptake by adipocytes. The polypeptide is Serine/threonine-protein phosphatase CPPED1 (CPPED1) (Pongo abelii (Sumatran orangutan)).